The sequence spans 466 residues: Methylenetetrahydrofolate--tRNA-(uracil-5-)-methyltransferase TrmFO (466 aa).

Position 12 to 17 (12 to 17 (GAGLAG)) interacts with FAD.

This sequence belongs to the MnmG family. TrmFO subfamily. Requires FAD as cofactor.

The protein resides in the cytoplasm. It carries out the reaction uridine(54) in tRNA + (6R)-5,10-methylene-5,6,7,8-tetrahydrofolate + NADH + H(+) = 5-methyluridine(54) in tRNA + (6S)-5,6,7,8-tetrahydrofolate + NAD(+). The catalysed reaction is uridine(54) in tRNA + (6R)-5,10-methylene-5,6,7,8-tetrahydrofolate + NADPH + H(+) = 5-methyluridine(54) in tRNA + (6S)-5,6,7,8-tetrahydrofolate + NADP(+). Functionally, catalyzes the folate-dependent formation of 5-methyl-uridine at position 54 (M-5-U54) in all tRNAs. In Synechococcus elongatus (strain ATCC 33912 / PCC 7942 / FACHB-805) (Anacystis nidulans R2), this protein is Methylenetetrahydrofolate--tRNA-(uracil-5-)-methyltransferase TrmFO.